A 988-amino-acid chain; its full sequence is Ubiquitin carboxyl-terminal hydrolase 36 (988 aa).

The segment at 16–55 (PTLRTDNNGARKQAEHPNNQSHHNHPHPTSNPNELPKPKR) is disordered. Low complexity predominate over residues 31–48 (HPNNQSHHNHPHPTSNPN). The USP domain maps to 78 to 386 (TGMINVGNTC…NAYIMFFELD (309 aa)). Catalysis depends on Cys87, which acts as the Nucleophile. His345 serves as the catalytic Proton acceptor. Disordered regions lie at residues 393–422 (PPAN…SPSP), 483–782 (ATSA…VTSN), and 868–988 (EQRQ…QQQT). Low complexity-rich tracts occupy residues 408-422 (STTP…SPSP) and 490-509 (NGNK…KSIN). Phosphoserine occurs at positions 419 and 421. The segment covering 532 to 544 (TTAQLPSMPNMTE) has biased composition (polar residues). Thr561 and Thr565 each carry phosphothreonine. 2 positions are modified to phosphoserine: Ser575 and Ser577. The segment covering 592-601 (EGEDFSESDQ) has biased composition (acidic residues). A compositionally biased stretch (polar residues) spans 602–631 (ESGQTNGHSKTNGSLTNGSASSSVHVNNSK). Residues 632-649 (QKTDAIDEIFKSLKKSAD) are compositionally biased toward basic and acidic residues. Phosphoserine is present on Ser650. Over residues 650–659 (SEEDDDEEEP) the composition is skewed to acidic residues. The span at 669 to 679 (PQKQSQSQSKA) shows a compositional bias: low complexity. Over residues 680 to 689 (PPSPKTPPSP) the composition is skewed to pro residues. Residue Ser682 is modified to Phosphoserine. At Thr685 the chain carries Phosphothreonine. Ser688 is subject to Phosphoserine. Residues 707–717 (VDAIDDDDDAV) are compositionally biased toward acidic residues. Thr728 is subject to Phosphothreonine. The segment covering 735 to 747 (NPFSSSKPSTDSP) has biased composition (polar residues). Ser746 is subject to Phosphoserine. Phosphothreonine is present on Thr749. The segment covering 762 to 782 (ALKSHQQPRVGNGYQSNVTSN) has biased composition (polar residues). Composition is skewed to low complexity over residues 892–903 (SGSAKGNNASNS) and 930–943 (RFHN…FQQR).

It belongs to the peptidase C19 family. As to quaternary structure, interacts with atms/PAF1, but not with CycT.

It localises to the nucleus. Its subcellular location is the nucleolus. The enzyme catalyses Thiol-dependent hydrolysis of ester, thioester, amide, peptide and isopeptide bonds formed by the C-terminal Gly of ubiquitin (a 76-residue protein attached to proteins as an intracellular targeting signal).. Functionally, required for maintaining multiple types of adult stem cells, including male and female germline, epithelial follicle cell and intestinal stem cells. May function as a transcriptional repressor by continually deubiquiting histone H2B at the promoters of genes critical for cellular differentiation, thereby preventing histone H3 'Lys-4' trimethylation (H3K4). Controls selective autophagy activation by ubiquitinated proteins. This Drosophila simulans (Fruit fly) protein is Ubiquitin carboxyl-terminal hydrolase 36 (Usp36).